The primary structure comprises 311 residues: Progestin and adipoQ receptor family member 3 (311 aa).

Residues 1 to 20 (MHQKLLKSAHYIELGSYQYW) form a required for interaction with SREBF2 region. Residues 1–70 (MHQKLLKSAH…KSLFILSNET (70 aa)) are Cytoplasmic-facing. The segment at 41–60 (KDNPYITDGYRAYLPSRLCI) is required for interaction with SCAP. Positions 61–71 (KSLFILSNETV) are golgi targeting. Residues 71-91 (VNIWSHLLGFFLFFTLGIYDM) traverse the membrane as a helical segment. The Lumenal segment spans residues 92-104 (TSVLPSASASRED). A helical membrane pass occupies residues 105–125 (FVICSICLFCFQVCMLCSVGY). Residues 126-145 (HLFSCHRSEKTCRRWMALDY) are Cytoplasmic-facing. The chain crosses the membrane as a helical span at residues 146 to 166 (AGISIGILGCYVSGVFYAFYC). Over 167 to 172 (NNYWRQ) the chain is Lumenal. The helical transmembrane segment at 173–193 (VYLITVLAMILAVFFAQIHPS) threads the bilayer. Over 194-203 (YLTQQWQRLR) the chain is Cytoplasmic. A helical transmembrane segment spans residues 204–224 (PIIFCSVSGYGVIPTLHWVWL). Residues 225–235 (NGGVSAPIVQD) lie on the Lumenal side of the membrane. A helical membrane pass occupies residues 236–256 (FAPRVIVMYVIALLAFLFYIS). Residues 257–275 (KVPERYFPGQLNYLGSSHQ) lie on the Cytoplasmic side of the membrane. Residues 276–296 (IWHVLAVVMLYWWHQSTVYVM) form a helical membrane-spanning segment. The Lumenal portion of the chain corresponds to 297-311 (QYRHSKPCPDYVSHL). Positions 299-303 (RHSKP) are golgi targeting.

This sequence belongs to the ADIPOR family. As to quaternary structure, interacts with SCAP and SREBF2; the interactions are direct, increase in low cholesterol conditions and tether SCAP:SREBP complex to the Golgi apparatus. Interaction with SCAP is mutually exclusive with INSIG1. In hepatocytes, interacts with PPARA and HUWE1; the interactions promote PPARA poylubiquitination and HUWE1-mediated degradation. In macrophages, interacts with PPARG and STUB1; the interactions promote PPARG poylubiquitination and STUB1-mediated degradation.

It localises to the golgi apparatus membrane. Functionally, golgi-anchored protein which modulates its interactors acitivies by tethering them to the Golgi apparatus. Functions as a spatial regulator of RAF1 kinase by sequestrating it to the Golgi apparatus. Acts as a positive regulator of cholesterol biosynthesis by mediating the anchoring of the SCAP:SREBP complex in the Golgi apparatus, thereby promoting SCAP:SREBF2 complex formation, potentiating SREBF2 and SREBF1 processing and enhancing lipid synthesis. Also regulates PPARA and PPARG functions by mediating their interaction with E3 ubiquitin ligases, such as STUB1 or HUWE1, leading to their polyubiquitination and proteasome-mediated degradation. In Mus musculus (Mouse), this protein is Progestin and adipoQ receptor family member 3.